The primary structure comprises 570 residues: Pre-mRNA 3'-end-processing factor FIP1 (570 aa).

Residues 1–10 show a composition bias toward basic and acidic residues; that stretch reads MSAEEADKTT. A disordered region spans residues 1–107; the sequence is MSAEEADKTT…SDDDDDDVRV (107 aa). The segment covering 16–38 has biased composition (acidic residues); that stretch reads AGDEEEEWLYGDEGESKETEEEE. Over residues 56 to 77 the composition is skewed to low complexity; that stretch reads DAPTTTNNSSDSATPPTTTTTT. The segment covering 87 to 104 has biased composition (acidic residues); sequence APGEDEDSESDSDDDDDD. A Phosphothreonine modification is found at T125. Residue S247 is modified to Phosphoserine. Disordered stretches follow at residues 300 to 328, 371 to 400, and 418 to 570; these read RRRH…VQKM, PNFP…YDGR, and GAVN…EAME. Pro residues predominate over residues 371–384; that stretch reads PNFPPPTGGPPPSL. Basic and acidic residues-rich tracts occupy residues 436–462 and 476–506; these read YPRR…RDHS and DEER…EERH. 2 stretches are compositionally biased toward basic residues: residues 520 to 529 and 538 to 548; these read KSSRSSSRRR and HRRHKHKKSKR. Residues 549 to 562 show a composition bias toward basic and acidic residues; the sequence is SKEGKEPSEERSAD.

It belongs to the FIP1 family.

It localises to the nucleus. Functionally, involved in mRNA processing. This Danio rerio (Zebrafish) protein is Pre-mRNA 3'-end-processing factor FIP1 (fip1l1).